Consider the following 1068-residue polypeptide: Carbamoyl phosphate synthase large chain (1068 aa).

Positions 1-401 (MPRRTDLHRI…SLLKAVRSLE (401 aa)) are carboxyphosphate synthetic domain. ATP is bound by residues Arg129, Arg169, Gly175, Gly176, Gln208, Ile210, Glu215, Gly241, Val242, His243, Gln284, and Glu298. Residues 133 to 327 (KQLMDELGQP…IAKIAAKIAV (195 aa)) enclose the ATP-grasp 1 domain. Residues Gln284, Glu298, and Asn300 each coordinate Mg(2+). Mn(2+)-binding residues include Gln284, Glu298, and Asn300. Residues 402 to 546 (IGVDHLALRE…YSTYEMENES (145 aa)) form an oligomerization domain region. The interval 547-935 (KKSQRPSVLV…ALYKVFEAAN (389 aa)) is carbamoyl phosphate synthetic domain. Residues 671 to 867 (ESLLAELGIP…MAEVATRIIL (197 aa)) enclose the ATP-grasp 2 domain. Positions 707, 746, 748, 752, 777, 778, 779, 780, 820, and 838 each coordinate ATP. Residues Gln820, Glu838, and Asn840 each contribute to the Mg(2+) site. Mn(2+) contacts are provided by Gln820, Glu838, and Asn840. An MGS-like domain is found at 936–1068 (LHVPEYGKIL…ESRVFSTESI (133 aa)). The interval 936–1068 (LHVPEYGKIL…ESRVFSTESI (133 aa)) is allosteric domain.

This sequence belongs to the CarB family. Composed of two chains; the small (or glutamine) chain promotes the hydrolysis of glutamine to ammonia, which is used by the large (or ammonia) chain to synthesize carbamoyl phosphate. Tetramer of heterodimers (alpha,beta)4. Mg(2+) serves as cofactor. It depends on Mn(2+) as a cofactor.

The enzyme catalyses hydrogencarbonate + L-glutamine + 2 ATP + H2O = carbamoyl phosphate + L-glutamate + 2 ADP + phosphate + 2 H(+). It carries out the reaction hydrogencarbonate + NH4(+) + 2 ATP = carbamoyl phosphate + 2 ADP + phosphate + 2 H(+). The protein operates within amino-acid biosynthesis; L-arginine biosynthesis; carbamoyl phosphate from bicarbonate: step 1/1. It participates in pyrimidine metabolism; UMP biosynthesis via de novo pathway; (S)-dihydroorotate from bicarbonate: step 1/3. Functionally, large subunit of the glutamine-dependent carbamoyl phosphate synthetase (CPSase). CPSase catalyzes the formation of carbamoyl phosphate from the ammonia moiety of glutamine, carbonate, and phosphate donated by ATP, constituting the first step of 2 biosynthetic pathways, one leading to arginine and/or urea and the other to pyrimidine nucleotides. The large subunit (synthetase) binds the substrates ammonia (free or transferred from glutamine from the small subunit), hydrogencarbonate and ATP and carries out an ATP-coupled ligase reaction, activating hydrogencarbonate by forming carboxy phosphate which reacts with ammonia to form carbamoyl phosphate. This chain is Carbamoyl phosphate synthase large chain, found in Cutibacterium acnes (strain DSM 16379 / KPA171202) (Propionibacterium acnes).